The primary structure comprises 201 residues: Recombination protein RecR (201 aa).

Residues 60-75 (CKKCFNLTSEDECEIC) form a C4-type zinc finger. The 95-residue stretch at 83–177 (KLICVVAETK…KVTRIAYGLP (95 aa)) folds into the Toprim domain.

It belongs to the RecR family.

Functionally, may play a role in DNA repair. It seems to be involved in an RecBC-independent recombinational process of DNA repair. It may act with RecF and RecO. The chain is Recombination protein RecR from Prochlorococcus marinus (strain MIT 9215).